A 146-amino-acid chain; its full sequence is Transcriptional regulator MraZ (146 aa).

2 consecutive SpoVT-AbrB domains span residues Thr4–Glu46 and Thr75–Arg118.

Belongs to the MraZ family. Forms oligomers.

The protein resides in the cytoplasm. The protein localises to the nucleoid. This is Transcriptional regulator MraZ from Mesomycoplasma hyopneumoniae (strain 232) (Mycoplasma hyopneumoniae).